Reading from the N-terminus, the 422-residue chain is Target of rapamycin complex 2 subunit bit61 (422 aa).

The segment covering 48 to 69 has biased composition (polar residues); the sequence is VTTKESNVGDSDTTENIKSPFN. The interval 48–101 is disordered; the sequence is VTTKESNVGDSDTTENIKSPFNGQWPFSRRSSQSSSHPVFEETHWSKHSKRPGK. A phosphoserine mark is found at serine 109, serine 132, and serine 201.

This sequence belongs to the BIT61 family. In terms of assembly, the target of rapamycin complex 2 (TORC2) is composed of at least bit61, pop3/wat1, sin1, ste20 and tor1. Either Thr-23, Thr-25 or Ser-26 and Ser-78 or Ser-79 are phosphorylated as well.

The protein localises to the cytoplasm. The protein resides in the nucleus. Functionally, component of TORC2, which regulates multiple cellular processes to control cell growth in response to environmental signals. TORC2 is required for cell survival under various stress conditions. TORC2 positively controls G1 cell-cycle arrest, sexual development and amino acid uptake. Positively regulates amino acid uptake through the control of expression of amino acid permeases. The polypeptide is Target of rapamycin complex 2 subunit bit61 (Schizosaccharomyces pombe (strain 972 / ATCC 24843) (Fission yeast)).